We begin with the raw amino-acid sequence, 822 residues long: Nuclear factor of activated T-cells, cytoplasmic 1 (822 aa).

Residues 110-115 are calcineurin-binding; sequence PRIEIT. Residues 118–210 form a transactivation domain A (TAD-A) region; sequence LGLHHNNGQF…CVSPKTTDPE (93 aa). Polar residues predominate over residues 192 to 206; the sequence is PQTSPWQSPCVSPKT. A disordered region spans residues 192-289; it reads PQTSPWQSPC…HSSPRVSVTD (98 aa). Repeat copies occupy residues 195-211 and 225-241. The 3 X SP repeats stretch occupies residues 195–290; the sequence is SPWQSPCVSP…SSPRVSVTDD (96 aa). Phosphoserine occurs at positions 225 and 229. The segment covering 225-242 has biased composition (low complexity); that stretch reads SPRHSPSTSPRTSVTEES. The residue at position 237 (S237) is a Phosphoserine; by PKA. The Nuclear localization signal signature appears at 257–259; the sequence is KRK. Copy 3 of the repeat occupies 274–290; sequence SPTPSPHSSPRVSVTDD. Phosphoserine; by PKA is present on S286. The Nuclear export signal signature appears at 302–313; that stretch reads SAIVAAINALST. Residues 400–582 form the RHD domain; that stretch reads PSLPALDWQL…NPIECSQRSA (183 aa). The DNA-binding element occupies 429–436; it reads RAHYETEG. Residues 672 to 674 carry the Nuclear localization signal motif; sequence KRK. The tract at residues 772–822 is disordered; that stretch reads GPGHLGLQRPAGGVLGGQEAPRPGGPHPGAPQLHPLNLSQSIVTRLTEPQP. The span at 808–822 shows a compositional bias: polar residues; that stretch reads NLSQSIVTRLTEPQP.

In terms of assembly, member of the multicomponent NFATC transcription complex that consists of at least two components, a pre-existing cytoplasmic component NFATC2 and an inducible nuclear component NFATC1. Other members such as NFATC4, NFATC3 or members of the activating protein-1 family, MAF, GATA4 and Cbp/p300 can also bind the complex. NFATC proteins bind to DNA as monomers. Interacts with HOMER2 and HOMER3; this interaction may compete with calcineurin/PPP3CA-binding and hence prevent NFATC1 dephosphorylation and activation. Interacts with TLE6/GRG6. In terms of processing, phosphorylated by NFATC-kinase and GSK3B; phosphorylation induces NFATC1 nuclear exit and dephosphorylation by calcineurin promotes nuclear import. Phosphorylation by PKA and DYRK2 negatively modulates nuclear accumulation, and promotes subsequent phosphorylation by GSK3B or casein kinase 1.

It localises to the cytoplasm. It is found in the nucleus. Plays a role in the inducible expression of cytokine genes in T-cells, especially in the induction of the IL-2 or IL-4 gene transcription. Also controls gene expression in embryonic cardiac cells. Could regulate not only the activation and proliferation but also the differentiation and programmed death of T-lymphocytes as well as lymphoid and non-lymphoid cells. Required for osteoclastogenesis and regulates many genes important for osteoclast differentiation and function. This Sus scrofa (Pig) protein is Nuclear factor of activated T-cells, cytoplasmic 1 (NFATC1).